Consider the following 797-residue polypeptide: Short transient receptor potential channel 4-associated protein (797 aa).

At Ala2 the chain carries N-acetylalanine. The interval 2-400 (AAAPVAAGSG…VLYVLCVLLM (399 aa)) is interaction with TNFRSF1A.

As to quaternary structure, component of the DCX(TRPC4AP) E3 ubiquitin ligase complex, at least composed of CUL4A, DDB1, TRPC4AP/TRUSS and RBX1. Interacts with MYC. Constitutively associated with TNFRSF1A. Directly interacts with TRADD, TRAF2, CHUK, IKBKB and IKBKG. Interacts with TRPC1, TRPC4 and TRPC5. (Microbial infection) Interacts with Hepatitis B virus (HBV) protein X; leading to prevent ubiquitination of TRPC4AP by SKP2. In terms of processing, phosphorylated by GSK3B; phosphorylation is required for ubiquitination. Ubiquitinated by a SCF (SKP1-CUL1-F-box protein) E3 ubiquitin-protein ligase containing SKP2, leading to its degradation. Phosphorylation by GSK3B is required for ubiquitination.

Its subcellular location is the cytoplasm. The protein resides in the perinuclear region. It functions in the pathway protein modification; protein ubiquitination. Substrate-recognition component of a DCX (DDB1-CUL4-X-box) E3 ubiquitin-protein ligase complex required for cell cycle control. The DCX(TRPC4AP) complex specifically mediates the polyubiquitination and subsequent degradation of MYC as part of the DesCEND (destruction via C-end degrons) pathway. The DesCEND (destruction via C-end degrons) pathway recognizes a C-degron located at the extreme C terminus of target proteins, leading to their ubiquitination and degradation. The DCX(TRPC4AP) complex specifically recognizes proteins with an arginine at the minus 3 position (R-3 motif) at the C-terminus, such as MYC, leading to their ubiquitination and degradation. Also participates in the activation of NFKB1 in response to ligation of TNFRSF1A, possibly by linking TNFRSF1A to the IKK signalosome. Involved in JNK activation via its interaction with TRAF2. Also involved in elevation of endoplasmic reticulum Ca(2+) storage reduction in response to CHRM1. This is Short transient receptor potential channel 4-associated protein from Homo sapiens (Human).